The chain runs to 115 residues: MFLAGVLCMCAAAASALFGSWSLCHTPTADPTALALRAMAPTQLAAAVMLAAGGVVAVAAPGHTALMVVIVCIAGAVGTLAAGSWQSAQYALRRETASPTANCVGSCAVCTQACH.

The next 3 helical transmembrane spans lie at 1 to 21 (MFLAGVLCMCAAAASALFGSW), 33 to 53 (ALALRAMAPTQLAAAVMLAAG), and 54 to 74 (GVVAVAAPGHTALMVVIVCIA).

This sequence to M.leprae ML0030.

It is found in the cell membrane. This is an uncharacterized protein from Mycobacterium tuberculosis (strain CDC 1551 / Oshkosh).